We begin with the raw amino-acid sequence, 251 residues long: Ditrans,polycis-undecaprenyl-diphosphate synthase ((2E,6E)-farnesyl-diphosphate specific) (251 aa).

Aspartate 21 is a catalytic residue. Residue aspartate 21 coordinates Mg(2+). Residues 22-25 (GNNR), tryptophan 26, histidine 38, and 66-68 (SSE) each bind substrate. The active-site Proton acceptor is asparagine 69. Residues tryptophan 70, arginine 72, arginine 189, and 195-197 (RIS) each bind substrate. Residue glutamate 208 participates in Mg(2+) binding.

Belongs to the UPP synthase family. Homodimer. It depends on Mg(2+) as a cofactor.

The catalysed reaction is 8 isopentenyl diphosphate + (2E,6E)-farnesyl diphosphate = di-trans,octa-cis-undecaprenyl diphosphate + 8 diphosphate. Catalyzes the sequential condensation of isopentenyl diphosphate (IPP) with (2E,6E)-farnesyl diphosphate (E,E-FPP) to yield (2Z,6Z,10Z,14Z,18Z,22Z,26Z,30Z,34E,38E)-undecaprenyl diphosphate (di-trans,octa-cis-UPP). UPP is the precursor of glycosyl carrier lipid in the biosynthesis of bacterial cell wall polysaccharide components such as peptidoglycan and lipopolysaccharide. This is Ditrans,polycis-undecaprenyl-diphosphate synthase ((2E,6E)-farnesyl-diphosphate specific) from Pseudomonas putida (strain ATCC 47054 / DSM 6125 / CFBP 8728 / NCIMB 11950 / KT2440).